The sequence spans 76 residues: UPF0248 protein PAE2518 (76 aa).

The protein belongs to the UPF0248 family.

This is UPF0248 protein PAE2518 from Pyrobaculum aerophilum (strain ATCC 51768 / DSM 7523 / JCM 9630 / CIP 104966 / NBRC 100827 / IM2).